The primary structure comprises 163 residues: Choriogonadotropin subunit beta (163 aa).

Positions 1–20 are cleaved as a signal peptide; that stretch reads MEMLQGLLLCLLLSTGGAWA. 6 disulfides stabilise this stretch: C29-C76, C43-C91, C46-C129, C54-C107, C58-C109, and C112-C119. Residue N50 is glycosylated (N-linked (GlcNAc...) asparagine). A glycan (N-linked (GlcNAc...) asparagine) is linked at N124. The span at 135 to 151 shows a compositional bias: polar residues; sequence QDSSSNVPPSNLTSPSQ. A disordered region spans residues 135–163; it reads QDSSSNVPPSNLTSPSQLLEPAVTPLVPQ. The O-linked (GalNAc...) serine glycan is linked to S139. Residue N145 is glycosylated (N-linked (GlcNAc...) asparagine). Residue S150 is glycosylated (O-linked (GalNAc...) serine).

The protein belongs to the glycoprotein hormones subunit beta family. As to quaternary structure, heterodimer of a common alpha chain and a unique beta chain which confers biological specificity to thyrotropin, lutropin, follitropin and gonadotropin.

It is found in the secreted. In terms of biological role, stimulates the ovaries to synthesize the steroids that are essential for the maintenance of pregnancy. In Saimiri boliviensis boliviensis (Bolivian squirrel monkey), this protein is Choriogonadotropin subunit beta (CGB).